We begin with the raw amino-acid sequence, 287 residues long: Shikimate dehydrogenase (NADP(+)) (287 aa).

Shikimate is bound by residues 18–20 (SYS) and T66. K70 (proton acceptor) is an active-site residue. NADP(+) is bound at residue E82. Shikimate-binding residues include N91 and D106. Residues 130–134 (GSGGA) and M228 each bind NADP(+). Y230 serves as a coordination point for shikimate. NADP(+) is bound at residue G251.

Belongs to the shikimate dehydrogenase family. As to quaternary structure, homodimer.

It carries out the reaction shikimate + NADP(+) = 3-dehydroshikimate + NADPH + H(+). Its pathway is metabolic intermediate biosynthesis; chorismate biosynthesis; chorismate from D-erythrose 4-phosphate and phosphoenolpyruvate: step 4/7. Its function is as follows. Involved in the biosynthesis of the chorismate, which leads to the biosynthesis of aromatic amino acids. Catalyzes the reversible NADPH linked reduction of 3-dehydroshikimate (DHSA) to yield shikimate (SA). This chain is Shikimate dehydrogenase (NADP(+)), found in Chlorobium chlorochromatii (strain CaD3).